A 345-amino-acid chain; its full sequence is Tyrosine-binding protein (345 aa).

A signal peptide spans 1–23 (MIKSKKILSLIIAGVLGVSMLTG). Residue cysteine 24 is the site of N-palmitoyl cysteine attachment. The S-diacylglycerol cysteine moiety is linked to residue cysteine 24.

As to quaternary structure, the complex is probably composed of two ATP-binding proteins (CDR20291_0806), two transmembrane proteins (CDR20291_0807) and a solute-binding protein (CDR20291_0805).

Its subcellular location is the cell membrane. In terms of biological role, probably part of an ABC transporter complex involved in tyrosine uptake. May also import phenylalanine. The polypeptide is Tyrosine-binding protein (Clostridioides difficile (strain R20291) (Peptoclostridium difficile)).